The sequence spans 392 residues: Copper-containing nitrite reductase (392 aa).

The first 18 residues, 1–18, serve as a signal peptide directing secretion; it reads MKRQALAAMIASLFALAA. The N-palmitoyl cysteine moiety is linked to residue cysteine 19. Residue cysteine 19 is the site of S-diacylglycerol cysteine attachment. The disordered stretch occupies residues 30-49; it reads ETPAASAEAASSAAQATAET. Plastocyanin-like domains follow at residues 101–195 and 245–346; these read WTFD…ILVE and GHVG…LKVE. Residues histidine 134, histidine 139, histidine 174, cysteine 175, histidine 183, and methionine 188 each coordinate Cu cation. Histidine 139 provides a ligand contact to substrate. Position 280 (histidine 280) interacts with substrate. Cu cation is bound at residue histidine 329. Residues 367–392 are disordered; it reads GAASAPAASAPAASAPAASASEKSVY. 4 repeat units span residues 368–372, 373–377, 378–382, and 383–387. The interval 368 to 387 is 4 X 5 AA tandem repeats of A-A-S-A-P; sequence AASAPAASAPAASAPAASAS.

The protein belongs to the multicopper oxidase family. In terms of assembly, homotrimer. It depends on Cu(+) as a cofactor. The cofactor is Cu(2+). In terms of processing, palmitoylated.

The protein resides in the cell outer membrane. The enzyme catalyses nitric oxide + Fe(III)-[cytochrome c] + H2O = Fe(II)-[cytochrome c] + nitrite + 2 H(+). Catalyzes the reduction of nitrite to nitric oxide (NO), probably with azurin as electron donor. Essential for growth and survival in oxygen-depleted environments. Can also provide protection against killing by normal human sera. The protein is Copper-containing nitrite reductase (aniA) of Neisseria gonorrhoeae.